The primary structure comprises 2593 residues: MIDSTSHSNLRSKAFIFGPQDLSFDVRSFNKLHSQLQNHQWVLDALASLPKLWDNFAASDQKVQQSNTGKLLENLNAWISSGVAPEEAFPLPNVLLSPLVVIGQLVEYMTFLKAAFPDLGKKHDLPISIKEDTETFGLCTGTLCAFAVACSSNIADIQHYGAVAARLAMLVGAIVDTEEVLSDPEGKSVSFSASWNSAEFSDSFTHVLETFPDAYVSVIVDQRRATLTASKKTAPAIIERLKQEGAHVTSIALSGRFHWKKHQDAVSSLIQFCGLDPDLQLADATKMLLPSRSSSDGQYITTGKLHELALRAILLEQSEWYKTCRISYLSKFIMDDAAVICFGPERCMPPTLARKLGPRLTYVSEIDISSSRVPGQLLGGTQKLNLTDLPDERIAVIGMACRLPGAEDHEGFWEILKTGQSQHREVPEDRFGMATAWREADKRKWYGNFIDNYDTFDHKFFKKSPREMASTDPQHRLMLQVAYQAVEQSGYFRNNGTNRRIGCFMGVGNVDYEDNIACYPANAYSATGNLKSFLAGKISHHFGWTGPSLTLDTACSSSSVAIHQACRSILSGECNGALAGGVNVITSPNWYHNLAGASFLSPTGQCKPFDAKGDGYCRGEGVGAVFLKRLSSAIADGDQVFGVIASTKVYQNQNCTAITVPNAISLSELFTDVVRQARLEPKDITLVEAHGTGTAVGDPAEYDGIRAVFGGPIRSDVLSLGSVKGLVGHTECASGVVSLIKTLLMIQQGFIPPQASFSSINPSLNAKAEEKIEISTRLKPWDAPFRAALINNYGASGSNASMVVTQPPNLTETPSTPLPGKSYPFWISAFDQQSLQSYVRRLRQFLEKHAADKNLSVANLSFQVACQSNWSLPQALVFSASTKEELNRALASFEKGSTDFPSVQLPDPKPVILCFGGQVSTYVGLDQEVYNSTAILRHYLDQCDAMCLSLGLQSIYPAIFQRSPIEDIVQLQTALFAMQYSCAKAWIDSGLKVASVVGHSFGELIALCVSNAVSLKDAVKMISGRARLIKERWGADKGSMIAVEADLSDVEALLAKVKSQMGSETGLAIACYNASKSFTLAGPTKDVDHAENLLKNDPDFSGIRYKRLNVTNAFHSVLVDALIDDLESLGQGIRFKEPTIKLERATEQESTSTLNANYVATHMRKPVFFAQAVKRLSDKFPVAIWLEAGSNSTITAMASRALGTSNSSFQAVNITSEGAFRFLCDTTVKLWKEGQKVSFWAHHRLQTPMYTPVLLPPYQFEKSRHWMDLKVPPKPEASVQVAEQTAIIEAPKGLTTFVGYQDASQRSVRFRVNVTTEKFNRLLSGHIMANAAAVCPGMFQVEIALDALTSLRPEFQARSFIPELHDLRHYQPLVRDESRAVWIEAHCPNAEGLVWNWKLTASDDKGSGSVTHTSGTITFQAADSVQVKSEFEKLRRLIGRKRCLQLLDSNVADDILQGRNIYRAFTEVIDYKEIYRHVTKIAGRDNESAGRVIKTYDGETWLDTVLTDCFCQVAGIFVNLMTTKIDLSERGIFICDGIDRWLRAPNAGSNNTPSQVYEVFALHHCESDSKYLSDVFAFDAREGSLVEVALGISYQKVSISGIRRVLSKGMPAGLQPQVPTSPAAVAAIKTVSPPPVADSPLVDGSSTAVSGTPPTKKAPKAPSVDITGKMREIICNLSGLEPDEVKDDSDLVELGIDSLMSMELAREVDLAFKTTIDVTQLIDVTDFRSLVECMQRILGIDNQEDNTYLAEGLNGHEGVVTNGNAYHVNGTNGVVNGNGVLFPELGGSILPKSAILDAFRIAKEATDDFILNGQLGTYYNEVMPRSTELCVAHIVNAFEQLGCPIRSAAAYQRLERVPYLPKHERFMNLIYGLLEEARLIDINGSEITRTSVPVSTKSVETMLEELLHDEPLHAAEHKLTSLTGSKFADCITGKEDGLQLIFGSPEGREIVTDVYAKSPINAVWIQQAEFFLEQLVKRLPNTGEPLRILEMGAGTGGTTVKMLPLLERLGVPVEYTMTDLSSSLIAAARKRFKKYPFMKFKVVNIESPPDPQLVHSQHIILATNCVHATRNLEISTRNIHRILRPDGFLLLLEMTEQVPWVDFIFGLLEGWWLFEDGRRHALQPATHWKKILTSVGYGHVDWTEGTRPEANIQRLIIALASEPRYDHTPQSLQPPVQVPLTDIAGRQEIIDTYIREYTEDFRALPIPGIQQAVMPAPTGHCVLVTGATGSLGSHVVGYLSRLPNVHTVVCLNRRSTVPATIRQEEALKVRGISLDDNSRSKLVVLEVETAKPLLGLPVETYQKLVNTATHIVHSAWPMSLTRPIRGYESQFKVMQNLINLAREVAAWRPVPFKFSFQFISSIGVVGYYPLRYGEIIAPEETMTADSVLPVGYAEAKLVCERMLDETLHQYPDRFRPMAVRIAQIAGSTSNGHWNPVEHFAFLIKSSQTLKALPDFDGSLSWCPVDDVSATLGELLISNTTPYSIYHIENPSRQQWRKMVKTLAQSLDIPRDGIIPFDQWIERVRNSSASINDNPARQLLEFFDQHFIRMSCGNLILDTTKTREHSATLRERGPVGPGLVEKYISAWKTMGFLD.

The N-terminal acylcarrier protein transacylase domain (SAT) stretch occupies residues 70–224; the sequence is KLLENLNAWI…YVSVIVDQRR (155 aa). The active-site Nucleophile; for transacylase activity is the cysteine 139. Residue histidine 258 is the Proton donor/acceptor; for transacylase activity of the active site. One can recognise a Ketosynthase family 3 (KS3) domain in the interval 391–806; the sequence is DERIAVIGMA…GSNASMVVTQ (416 aa). Active-site for beta-ketoacyl synthase activity residues include cysteine 555, histidine 690, and histidine 729. A malonyl-CoA:ACP transacylase (MAT) domain region spans residues 906-1191; it reads PDPKPVILCF…VAIWLEAGSN (286 aa). Residues 1291 to 1424 are N-terminal hotdog fold; the sequence is PKGLTTFVGY…GTITFQAADS (134 aa). Residues 1291–1603 enclose the PKS/mFAS DH domain; it reads PKGLTTFVGY…YQKVSISGIR (313 aa). The product template (PT) domain stretch occupies residues 1322–1601; that stretch reads LLSGHIMANA…ISYQKVSISG (280 aa). Histidine 1326 (proton acceptor; for dehydratase activity) is an active-site residue. A C-terminal hotdog fold region spans residues 1451–1603; it reads VADDILQGRN…YQKVSISGIR (153 aa). Aspartate 1508 functions as the Proton donor; for dehydratase activity in the catalytic mechanism. The segment at 1636-1662 is disordered; that stretch reads VADSPLVDGSSTAVSGTPPTKKAPKAP. In terms of domain architecture, Carrier spans 1661 to 1738; the sequence is APSVDITGKM…SLVECMQRIL (78 aa). Serine 1689 is subject to O-(pantetheine 4'-phosphoryl)serine. Catalysis depends on for methyltransferase activity residues tyrosine 1955, histidine 2067, and glutamate 2093. Residues 1960-2134 form a methyltransferase (CMeT) domain region; the sequence is INAVWIQQAE…ATHWKKILTS (175 aa). The interval 2215-2459 is NADPH-binding (R) domain; that stretch reads PAPTGHCVLV…KALPDFDGSL (245 aa).

The cofactor is pantetheine 4'-phosphate.

It functions in the pathway mycotoxin biosynthesis. Functionally, non-reducing polyketide synthase; part of the gene cluster that mediates the biosynthesis of the mycotoxin citrinin, a hepato-nephrotoxic compound to humans due to inhibition of respiration complex III. The pathway begins with the synthesis of a keto-aldehyde intermediate by the citrinin PKS (pksCT) from successive condensations of 4 malonyl-CoA units, presumably with a simple acetyl-CoA starter unit. Release of the keto-aldehyde intermediate is consistent with the presence of the C-terminal reductive release domain. Mp11 collaborates with pksCT by catalyzing the hydrolysis of ACP-bound acyl intermediates to free the ACP from stalled intermediates. Mpl2 then catalyzes the oxidation of the C-12 methyl of the ketone intermediate to an alcohol intermediate which is further oxidized by the oxidoreductase mpl7 to produce a bisaldehyde intermediate. The fourth catalytic step is catalyzed by the mpl4 aldehyde dehydrogenase. The final transformation is the reduction of C-3 by mpl6 to provide the chemically stable citrinin nucleus. This Monascus purpureus (Red mold) protein is Citrinin polyketide synthase.